The primary structure comprises 304 residues: Sulfate adenylyltransferase subunit 2 1 (304 aa).

It belongs to the PAPS reductase family. CysD subfamily. As to quaternary structure, heterodimer composed of CysD, the smaller subunit, and CysN.

The catalysed reaction is sulfate + ATP + H(+) = adenosine 5'-phosphosulfate + diphosphate. The protein operates within sulfur metabolism; hydrogen sulfide biosynthesis; sulfite from sulfate: step 1/3. In terms of biological role, with CysN forms the ATP sulfurylase (ATPS) that catalyzes the adenylation of sulfate producing adenosine 5'-phosphosulfate (APS) and diphosphate, the first enzymatic step in sulfur assimilation pathway. APS synthesis involves the formation of a high-energy phosphoric-sulfuric acid anhydride bond driven by GTP hydrolysis by CysN coupled to ATP hydrolysis by CysD. The protein is Sulfate adenylyltransferase subunit 2 1 of Marinobacter nauticus (strain ATCC 700491 / DSM 11845 / VT8) (Marinobacter aquaeolei).